Here is a 217-residue protein sequence, read N- to C-terminus: Thymidylate kinase (217 aa).

Residue 11 to 18 participates in ATP binding; sequence GLEGAGKS.

Belongs to the thymidylate kinase family.

The catalysed reaction is dTMP + ATP = dTDP + ADP. Functionally, phosphorylation of dTMP to form dTDP in both de novo and salvage pathways of dTTP synthesis. The polypeptide is Thymidylate kinase (Alkalilimnicola ehrlichii (strain ATCC BAA-1101 / DSM 17681 / MLHE-1)).